Here is a 318-residue protein sequence, read N- to C-terminus: MEKYDLAIIGAGPIGLFAASFANLHGLKTISFDALDEIGGQINMLYPQKNIKDIPAFPSIKGKKLVSQLLEQNINTKFILSHKVKEISFLENENILVDKKYEVKSLLIATGLGAFKPKTLPLSTTLDVNQHIHYSMQHPEIFANKKVAILGGGDSALDWALELANTSDVFLIHRRNEFRGLESSVNKLKSLKNVELLTPYLPKDLQLNNNRMELVLHKVGASQDFVTKNVDEILVAYGFKSDNRQLRKWGIKLDHNLIAVSQKMHTNLPHVYAIGDAITYPGRVPMIALGFGEAQIAISNIMQDLFPEKTMTFHSTSI.

FAD-binding residues include D33, Q41, Y46, V84, F115, D276, and T316.

Belongs to the ferredoxin--NADP reductase type 2 family. In terms of assembly, homodimer. FAD serves as cofactor.

It carries out the reaction 2 reduced [2Fe-2S]-[ferredoxin] + NADP(+) + H(+) = 2 oxidized [2Fe-2S]-[ferredoxin] + NADPH. The polypeptide is Ferredoxin--NADP reductase (Lactobacillus gasseri (strain ATCC 33323 / DSM 20243 / BCRC 14619 / CIP 102991 / JCM 1131 / KCTC 3163 / NCIMB 11718 / NCTC 13722 / AM63)).